A 272-amino-acid polypeptide reads, in one-letter code: Prohibitin 1 (272 aa).

A2 carries the post-translational modification N-acetylalanine. Position 91 is a phosphothreonine (T91). 2 positions are modified to N6-acetyllysine: K128 and K186. Positions 177–211 form a coiled coil; the sequence is KEFTEAVEAKQVAQQEAERARFVVEKAEQQKKAAI. K202 bears the N6-acetyllysine; alternate mark. K202 carries the post-translational modification N6-succinyllysine; alternate. A Phosphotyrosine modification is found at Y249.

This sequence belongs to the prohibitin family. Interacts with PHB2. Interacts with STOML2. Interacts with CD86 (via cytoplasmic domain); the interactions increases after priming with CD40. As to quaternary structure, (Microbial infection) Interacts with human enterovirus 71/EV-71 capsid protein VP0, protein 3CD and protease 3C. As to expression, widely expressed in different tissues.

The protein resides in the mitochondrion inner membrane. It is found in the nucleus. The protein localises to the cell membrane. Its subcellular location is the cytoplasm. With respect to regulation, target of the anti-cancer drug Rocaglamide (Roc-A). Its function is as follows. Protein with pleiotropic attributes mediated in a cell-compartment- and tissue-specific manner, which include the plasma membrane-associated cell signaling functions, mitochondrial chaperone, and transcriptional co-regulator of transcription factors in the nucleus. Plays a role in adipose tissue and glucose homeostasis in a sex-specific manner. Contributes to pulmonary vascular remodeling by accelerating proliferation of pulmonary arterial smooth muscle cells. In the mitochondria, together with PHB2, forms large ring complexes (prohibitin complexes) in the inner mitochondrial membrane (IMM) and functions as a chaperone protein that stabilizes mitochondrial respiratory enzymes and maintains mitochondrial integrity in the IMM, which is required for mitochondrial morphogenesis, neuronal survival, and normal lifespan. The prohibitin complex, with DNAJC19, regulates cardiolipin remodeling and the protein turnover of OMA1 in a cardiolipin-binding manner. Regulates mitochondrial respiration activity playing a role in cellular aging. The prohibitin complex plays a role of mitophagy receptor involved in targeting mitochondria for autophagic degradation. Involved in mitochondrial-mediated antiviral innate immunity, activates RIG-I-mediated signal transduction and production of IFNB1 and pro-inflammatory cytokine IL6. In terms of biological role, in the nucleus, acts as a transcription coregulator, enhances promoter binding by TP53, a transcription factor it activates, but reduces the promoter binding by E2F1, a transcription factor it represses. Interacts with STAT3 to affect IL17 secretion in T-helper Th17 cells. Functionally, in the plasma membrane, cooperates with CD86 to mediate CD86-signaling in B lymphocytes that regulates the level of IgG1 produced through the activation of distal signaling intermediates. Upon CD40 engagement, required to activate NF-kappa-B signaling pathway via phospholipase C and protein kinase C activation. Its function is as follows. (Microbial infection) In neuronal cells, cell surface-expressed PHB1 is involved in human enterovirus 71/EV-71 entry into neuronal cells specifically, while membrane-bound mitochondrial PHB1 associates with the virus replication complex and facilitates viral replication. May serve as a receptor for EV71. The sequence is that of Prohibitin 1 (Phb1) from Mus musculus (Mouse).